The primary structure comprises 419 residues: Acyl-[acyl-carrier-protein] desaturase 6, chloroplastic (419 aa).

Residues 1 to 54 (MAATATMAMPLANRLRCKPNTNSSSPSRTLFGRRVTMISSSRWGSAVSGSAIMS) constitute a chloroplast transit peptide. Residues Glu151, Glu189, His192, Glu242, Glu277, and His280 each coordinate Fe cation.

Belongs to the fatty acid desaturase type 2 family. In terms of assembly, homodimer. Requires Fe(2+) as cofactor.

The protein localises to the plastid. Its subcellular location is the chloroplast. It participates in lipid metabolism; fatty acid metabolism. Introduces a cis double bond in the acyl chain of an acyl-[acyl-carrier protein]. This chain is Acyl-[acyl-carrier-protein] desaturase 6, chloroplastic, found in Oryza sativa subsp. japonica (Rice).